Reading from the N-terminus, the 258-residue chain is Tryptophan synthase alpha chain (258 aa).

Residues Glu52 and Asp63 each act as proton acceptor in the active site.

The protein belongs to the TrpA family. In terms of assembly, tetramer of two alpha and two beta chains.

The enzyme catalyses (1S,2R)-1-C-(indol-3-yl)glycerol 3-phosphate + L-serine = D-glyceraldehyde 3-phosphate + L-tryptophan + H2O. Its pathway is amino-acid biosynthesis; L-tryptophan biosynthesis; L-tryptophan from chorismate: step 5/5. Its function is as follows. The alpha subunit is responsible for the aldol cleavage of indoleglycerol phosphate to indole and glyceraldehyde 3-phosphate. The sequence is that of Tryptophan synthase alpha chain from Streptococcus pneumoniae serotype 4 (strain ATCC BAA-334 / TIGR4).